The following is a 285-amino-acid chain: Protoheme IX farnesyltransferase (285 aa).

The next 7 membrane-spanning stretches (helical) occupy residues 16–36, 40–60, 106–126, 136–156, 165–185, 217–237, and 265–285; these read AKPKVVSLLDVVAIASYILAF, WYNLIPVLIGGSIAAGGSMII, LLANPLTAFFILLGSLVYVFV, WLNIVIGGFAGSAAAWAGYAA, SLLLGLLVFAWTPGHFWALAL, ILMIPFALGLMLYLNLIYVII, and YKFSAPYLAIVMIAAVISFIL.

It belongs to the UbiA prenyltransferase family. Protoheme IX farnesyltransferase subfamily.

The protein resides in the cell membrane. It catalyses the reaction heme b + (2E,6E)-farnesyl diphosphate + H2O = Fe(II)-heme o + diphosphate. The protein operates within porphyrin-containing compound metabolism; heme O biosynthesis; heme O from protoheme: step 1/1. Converts heme B (protoheme IX) to heme O by substitution of the vinyl group on carbon 2 of heme B porphyrin ring with a hydroxyethyl farnesyl side group. This chain is Protoheme IX farnesyltransferase, found in Sulfolobus acidocaldarius (strain ATCC 33909 / DSM 639 / JCM 8929 / NBRC 15157 / NCIMB 11770).